The primary structure comprises 461 residues: Bifunctional protein HldE (461 aa).

The segment at 1 to 312 (MLEFLSQQKP…IKSFNRVDFE (312 aa)) is ribokinase. 191-194 (NKKE) provides a ligand contact to ATP. Residue Asp-259 is part of the active site. The segment at 334-461 (FTNGCFDIVH…KIIEKIKDKK (128 aa)) is cytidylyltransferase.

In the N-terminal section; belongs to the carbohydrate kinase PfkB family. This sequence in the C-terminal section; belongs to the cytidylyltransferase family. Homodimer.

It carries out the reaction D-glycero-beta-D-manno-heptose 7-phosphate + ATP = D-glycero-beta-D-manno-heptose 1,7-bisphosphate + ADP + H(+). The enzyme catalyses D-glycero-beta-D-manno-heptose 1-phosphate + ATP + H(+) = ADP-D-glycero-beta-D-manno-heptose + diphosphate. It functions in the pathway nucleotide-sugar biosynthesis; ADP-L-glycero-beta-D-manno-heptose biosynthesis; ADP-L-glycero-beta-D-manno-heptose from D-glycero-beta-D-manno-heptose 7-phosphate: step 1/4. It participates in nucleotide-sugar biosynthesis; ADP-L-glycero-beta-D-manno-heptose biosynthesis; ADP-L-glycero-beta-D-manno-heptose from D-glycero-beta-D-manno-heptose 7-phosphate: step 3/4. In terms of biological role, catalyzes the phosphorylation of D-glycero-D-manno-heptose 7-phosphate at the C-1 position to selectively form D-glycero-beta-D-manno-heptose-1,7-bisphosphate. Its function is as follows. Catalyzes the ADP transfer from ATP to D-glycero-beta-D-manno-heptose 1-phosphate, yielding ADP-D-glycero-beta-D-manno-heptose. This chain is Bifunctional protein HldE, found in Campylobacter jejuni subsp. doylei (strain ATCC BAA-1458 / RM4099 / 269.97).